A 188-amino-acid chain; its full sequence is Anaphase-promoting complex subunit 10 (188 aa).

Residues 4-187 (NSNINSNSRL…SPEVSMFQTL (184 aa)) form the DOC domain.

This sequence belongs to the APC10 family. The APC/C is composed of at least 13 subunits that stay tightly associated throughout the cell cycle: anapc1, anapc2, anapc3, anapc4, anapc5, anapc6, anapc7, anapc8, anapc10, anapc11, cdc20, cdc26 and cdh1.

It localises to the nucleus. It participates in protein modification; protein ubiquitination. Component of the anaphase promoting complex/cyclosome (APC/C), a cell cycle-regulated E3 ubiquitin-protein ligase complex that controls progression through mitosis and the G1 phase of the cell cycle. In Dictyostelium discoideum (Social amoeba), this protein is Anaphase-promoting complex subunit 10 (anapc10).